The following is a 312-amino-acid chain: Ribosomal RNA small subunit methyltransferase H (312 aa).

Residues 33 to 35, Asp-53, Phe-80, Asp-101, and Gln-108 each bind S-adenosyl-L-methionine; that span reads GGH.

It belongs to the methyltransferase superfamily. RsmH family.

The protein resides in the cytoplasm. The enzyme catalyses cytidine(1402) in 16S rRNA + S-adenosyl-L-methionine = N(4)-methylcytidine(1402) in 16S rRNA + S-adenosyl-L-homocysteine + H(+). Specifically methylates the N4 position of cytidine in position 1402 (C1402) of 16S rRNA. The sequence is that of Ribosomal RNA small subunit methyltransferase H from Desulfosudis oleivorans (strain DSM 6200 / JCM 39069 / Hxd3) (Desulfococcus oleovorans).